The following is a 149-amino-acid chain: D-aminoacyl-tRNA deacylase (149 aa).

A Gly-cisPro motif, important for rejection of L-amino acids motif is present at residues 137–138; it reads GP.

It belongs to the DTD family. In terms of assembly, homodimer.

The protein localises to the cytoplasm. The catalysed reaction is glycyl-tRNA(Ala) + H2O = tRNA(Ala) + glycine + H(+). The enzyme catalyses a D-aminoacyl-tRNA + H2O = a tRNA + a D-alpha-amino acid + H(+). Functionally, an aminoacyl-tRNA editing enzyme that deacylates mischarged D-aminoacyl-tRNAs. Also deacylates mischarged glycyl-tRNA(Ala), protecting cells against glycine mischarging by AlaRS. Acts via tRNA-based rather than protein-based catalysis; rejects L-amino acids rather than detecting D-amino acids in the active site. By recycling D-aminoacyl-tRNA to D-amino acids and free tRNA molecules, this enzyme counteracts the toxicity associated with the formation of D-aminoacyl-tRNA entities in vivo and helps enforce protein L-homochirality. The polypeptide is D-aminoacyl-tRNA deacylase (Desulforamulus reducens (strain ATCC BAA-1160 / DSM 100696 / MI-1) (Desulfotomaculum reducens)).